The primary structure comprises 302 residues: Nucleotide-binding protein Bcenmc03_2806 (302 aa).

8–15 (GISGSGKS) provides a ligand contact to ATP. 57–60 (DARS) is a GTP binding site.

The protein belongs to the RapZ-like family.

Its function is as follows. Displays ATPase and GTPase activities. This Burkholderia orbicola (strain MC0-3) protein is Nucleotide-binding protein Bcenmc03_2806.